A 137-amino-acid polypeptide reads, in one-letter code: Outer membrane protein assembly factor BamE (137 aa).

Positions 1–18 (MQVKTLLGATFLALSLAS) are cleaved as a signal peptide. A lipid anchor (N-palmitoyl cysteine) is attached at Cys19. Cys19 carries the S-diacylglycerol cysteine lipid modification.

It belongs to the BamE family. In terms of assembly, part of the Bam complex.

It is found in the cell outer membrane. Its function is as follows. Part of the outer membrane protein assembly complex, which is involved in assembly and insertion of beta-barrel proteins into the outer membrane. This chain is Outer membrane protein assembly factor BamE, found in Haemophilus influenzae (strain ATCC 51907 / DSM 11121 / KW20 / Rd).